An 81-amino-acid polypeptide reads, in one-letter code: Photosystem I iron-sulfur center (81 aa).

4Fe-4S ferredoxin-type domains follow at residues 2 to 31 (SHSV…MIPW) and 39 to 68 (IASA…VRVY). 8 residues coordinate [4Fe-4S] cluster: C11, C14, C17, C21, C48, C51, C54, and C58.

The eukaryotic PSI reaction center is composed of at least 11 subunits. [4Fe-4S] cluster is required as a cofactor.

Its subcellular location is the plastid. The protein resides in the chloroplast thylakoid membrane. It catalyses the reaction reduced [plastocyanin] + hnu + oxidized [2Fe-2S]-[ferredoxin] = oxidized [plastocyanin] + reduced [2Fe-2S]-[ferredoxin]. Apoprotein for the two 4Fe-4S centers FA and FB of photosystem I (PSI); essential for photochemical activity. FB is the terminal electron acceptor of PSI, donating electrons to ferredoxin. The C-terminus interacts with PsaA/B/D and helps assemble the protein into the PSI complex. Required for binding of PsaD and PsaE to PSI. PSI is a plastocyanin-ferredoxin oxidoreductase, converting photonic excitation into a charge separation, which transfers an electron from the donor P700 chlorophyll pair to the spectroscopically characterized acceptors A0, A1, FX, FA and FB in turn. In Zea mays (Maize), this protein is Photosystem I iron-sulfur center.